We begin with the raw amino-acid sequence, 215 residues long: Ribonuclease S-6 (215 aa).

Residues 1–22 (MFNLPLTSVFVIFLFALSPIYG) form the signal peptide. An RNA-binding site is contributed by Gln-32. The cysteines at positions 38 and 43 are disulfide-linked. Asn-49 carries N-linked (GlcNAc...) asparagine glycosylation. His-53 lines the RNA pocket. His-53 (proton donor) is an active-site residue. N-linked (GlcNAc...) asparagine glycosylation is present at Asn-59. A disulfide bridge connects residues Cys-67 and Cys-116. RNA-binding positions include 91–92 (DL), Arg-94, Phe-105, 108–109 (RE), and 112–113 (KH). Residue Glu-109 is part of the active site. His-113 (proton acceptor) is an active-site residue. N-linked (GlcNAc...) asparagine glycans are attached at residues Asn-160 and Asn-172. Disulfide bonds link Cys-175-Cys-204 and Cys-187-Cys-198.

The protein belongs to the RNase T2 family.

The protein resides in the secreted. Its subcellular location is the extracellular space. The catalysed reaction is a ribonucleotidyl-ribonucleotide-RNA + H2O = a 3'-end 3'-phospho-ribonucleotide-RNA + a 5'-end dephospho-ribonucleoside-RNA + H(+). Self-incompatibility (SI) is the inherited ability of a flowering plant to prevent self-fertilization by discriminating between self and non-self pollen during pollination. In many species of the Solanaceae, self-incompatibility is controlled by the single, multiallelic locus S. This stylar glycoprotein is associated with expression of self-incompatibility in potato. The sequence is that of Ribonuclease S-6 from Nicotiana alata (Winged tobacco).